We begin with the raw amino-acid sequence, 241 residues long: MGQKVSPNVLRLGIVRDWEDTWYAEKDQYVKWLDQDIKIREGVLKLLKDAAVSKIKIERTNSNITLIIRTARPAIVLGQEGKNVSNIATAVQKIAKDRNLKVEVKVIEVKNPDADRTLVARWIGEQITNRASFRTVQKLAIRKALKAGVKGIKTSVSGRLGGVEMARTEGYIEGSVPLSTLRADIDYALYEAPTTYGQIGVKVWINHGEVIGGQSQRVSEKAPMNNDRRFNNKNNNRGGRK.

The 70-residue stretch at 39 to 108 (IREGVLKLLK…NLKVEVKVIE (70 aa)) folds into the KH type-2 domain. The disordered stretch occupies residues 215-241 (SQRVSEKAPMNNDRRFNNKNNNRGGRK). Low complexity predominate over residues 232–241 (NKNNNRGGRK).

Belongs to the universal ribosomal protein uS3 family. In terms of assembly, part of the 30S ribosomal subunit. Forms a tight complex with proteins S10 and S14.

Functionally, binds the lower part of the 30S subunit head. Binds mRNA in the 70S ribosome, positioning it for translation. In Mesoplasma florum (Acholeplasma florum), this protein is Small ribosomal subunit protein uS3.